Consider the following 404-residue polypeptide: 11-beta-hydroxysteroid dehydrogenase type 2 (404 aa).

NAD(+) is bound at residue T82–A111. S219 lines the substrate pocket. Y232 (proton acceptor) is an active-site residue. The segment at L383–Q404 is disordered.

This sequence belongs to the short-chain dehydrogenases/reductases (SDR) family. Interacts with ligand-free cytoplasmic NR3C2. In terms of tissue distribution, highly expressed in kidney, adrenal and colon; detected at lower levels on lung, liver, and spleen. Expressed in oocytes. Expressed in uterine tissues and in corpora lutea.

It localises to the microsome. It is found in the endoplasmic reticulum. The enzyme catalyses an 11beta-hydroxysteroid + NAD(+) = an 11-oxosteroid + NADH + H(+). It carries out the reaction corticosterone + NAD(+) = 11-dehydrocorticosterone + NADH + H(+). It catalyses the reaction cortisol + NAD(+) = cortisone + NADH + H(+). The catalysed reaction is 11beta,17beta-dihydroxyandrost-4-ene-3-one + NAD(+) = 17beta-hydroxyandrost-4-ene-3,11-dione + NADH + H(+). The enzyme catalyses 11beta-hydroxyandrost-4-ene-3,17-dione + NAD(+) = androst-4-ene-3,11,17-trione + NADH + H(+). It participates in steroid metabolism. Inhibited by glycyrrhetinic acid, carbenoloxone, 11-alpha-OH-progesterone and 11-beta-OH-progesterone. Functionally, catalyzes the conversion of biologically active 11beta-hydroxyglucocorticoids (11beta-hydroxysteroid) such as cortisol, to inactive 11-ketoglucocorticoids (11-oxosteroid) such as cortisone, in the presence of NAD(+). Functions as a dehydrogenase (oxidase), thereby decreasing the concentration of active glucocorticoids, thus protecting the nonselective mineralocorticoid receptor from occupation by glucocorticoids. Affinity towards corticosterone is higher than cortisol or dexamethasone. Plays an important role in maintaining glucocorticoids balance during preimplantation and protects the fetus from excessive maternal corticosterone exposure. Catalyzes the oxidation of 11beta-hydroxytestosterone (11beta,17beta-dihydroxyandrost-4-ene-3-one) to 11-ketotestosterone (17beta-hydroxyandrost-4-ene-3,11-dione), a major bioactive androgen. Catalyzes the conversion of 11beta-hydroxyandrostenedione (11beta-hydroxyandrost-4-ene-3,17-dione) to 11-ketoandrostenedione (androst-4-ene-3,11,17-trione), which can be further metabolized to 11-ketotestosterone. Converts 7-beta-25-dihydroxycholesterol to 7-oxo-25-hydroxycholesterol in vitro. 7-beta-25-dihydroxycholesterol (not 7-oxo-25-hydroxycholesterol) acts as ligand for the G-protein-coupled receptor (GPCR) Epstein-Barr virus-induced gene 2 (EBI2) and may thereby regulate immune cell migration. May protect ovulating oocytes and fertilizing spermatozoa from the adverse effects of cortisol. This Bos taurus (Bovine) protein is 11-beta-hydroxysteroid dehydrogenase type 2 (HSD11B2).